A 90-amino-acid chain; its full sequence is Small ribosomal subunit protein bS16 (90 aa).

Belongs to the bacterial ribosomal protein bS16 family.

The sequence is that of Small ribosomal subunit protein bS16 from Lactobacillus gasseri (strain ATCC 33323 / DSM 20243 / BCRC 14619 / CIP 102991 / JCM 1131 / KCTC 3163 / NCIMB 11718 / NCTC 13722 / AM63).